The chain runs to 126 residues: Glycine cleavage system H protein (126 aa).

The Lipoyl-binding domain maps to T24–K106. K65 bears the N6-lipoyllysine mark.

The protein belongs to the GcvH family. As to quaternary structure, the glycine cleavage system is composed of four proteins: P, T, L and H. Requires (R)-lipoate as cofactor.

In terms of biological role, the glycine cleavage system catalyzes the degradation of glycine. The H protein shuttles the methylamine group of glycine from the P protein to the T protein. In Psychrobacter arcticus (strain DSM 17307 / VKM B-2377 / 273-4), this protein is Glycine cleavage system H protein.